Consider the following 281-residue polypeptide: Phosphate import ATP-binding protein PstB (281 aa).

Positions F33 to I276 constitute an ABC transporter domain. An ATP-binding site is contributed by G67–S74.

The protein belongs to the ABC transporter superfamily. Phosphate importer (TC 3.A.1.7) family. As to quaternary structure, the complex is composed of two ATP-binding proteins (PstB), two transmembrane proteins (PstC and PstA) and a solute-binding protein (PstS).

The protein localises to the cell membrane. The catalysed reaction is phosphate(out) + ATP + H2O = ADP + 2 phosphate(in) + H(+). Functionally, part of the ABC transporter complex PstSACB involved in phosphate import. Responsible for energy coupling to the transport system. The protein is Phosphate import ATP-binding protein PstB of Mycoplasma mobile (strain ATCC 43663 / 163K / NCTC 11711) (Mesomycoplasma mobile).